The sequence spans 697 residues: SITS-binding protein (697 aa).

The segment at 1–20 is disordered; sequence MARRAKKMASNSGDSSPEPG. Residues 2 to 29 are Cytoplasmic-facing; it reads ARRAKKMASNSGDSSPEPGIKEINETWK. The chain crosses the membrane as a helical span at residues 30–50; the sequence is GAIACLGVALLFLMTIGVLYW. 6 N-linked (GlcNAc...) asparagine glycosylation sites follow: Asn112, Asn134, Asn162, Asn386, Asn405, and Asn470. Helical transmembrane passes span 503–521 and 542–562; these read GLIPSILHYSLLGYSFFIP and WMQIATFLPVMSFSTPPWVFG. N-linked (GlcNAc...) asparagine glycosylation occurs at Asn568.

It belongs to the glycosyl hydrolase 31 family. As to quaternary structure, homodimer; disulfide-linked. As to expression, electroplax tissue, brain (200-fold less), and heart (500-fold less).

It is found in the membrane. In terms of biological role, this glycoprotein is probably not a functional part of the chloride channel. In Tetronarce californica (Pacific electric ray), this protein is SITS-binding protein.